The primary structure comprises 186 residues: Ribosome-recycling factor (186 aa).

The protein belongs to the RRF family.

It localises to the cytoplasm. Responsible for the release of ribosomes from messenger RNA at the termination of protein biosynthesis. May increase the efficiency of translation by recycling ribosomes from one round of translation to another. The polypeptide is Ribosome-recycling factor (Chlorobium limicola (strain DSM 245 / NBRC 103803 / 6330)).